A 234-amino-acid polypeptide reads, in one-letter code: Leucyl/phenylalanyl-tRNA--protein transferase (234 aa).

Belongs to the L/F-transferase family.

Its subcellular location is the cytoplasm. It catalyses the reaction N-terminal L-lysyl-[protein] + L-leucyl-tRNA(Leu) = N-terminal L-leucyl-L-lysyl-[protein] + tRNA(Leu) + H(+). It carries out the reaction N-terminal L-arginyl-[protein] + L-leucyl-tRNA(Leu) = N-terminal L-leucyl-L-arginyl-[protein] + tRNA(Leu) + H(+). The catalysed reaction is L-phenylalanyl-tRNA(Phe) + an N-terminal L-alpha-aminoacyl-[protein] = an N-terminal L-phenylalanyl-L-alpha-aminoacyl-[protein] + tRNA(Phe). In terms of biological role, functions in the N-end rule pathway of protein degradation where it conjugates Leu, Phe and, less efficiently, Met from aminoacyl-tRNAs to the N-termini of proteins containing an N-terminal arginine or lysine. The protein is Leucyl/phenylalanyl-tRNA--protein transferase of Shigella sonnei (strain Ss046).